A 355-amino-acid chain; its full sequence is Blue-sensitive opsin (355 aa).

At 1–41 the chain is on the extracellular side; sequence MKSRPQEFQEDFYIPIPLDTNNITALSPFLVPQDHLGGSGI. Asn22 carries N-linked (GlcNAc...) asparagine glycosylation. The chain crosses the membrane as a helical span at residues 42–66; sequence FMIMTVFMLFLFIGGTSINVLTIVC. Topologically, residues 67–78 are cytoplasmic; that stretch reads TVQYKKLRSHLN. A helical membrane pass occupies residues 79-104; it reads YILVNLAISNLLVSTVGSFTAFVSFL. Residues 105–118 lie on the Extracellular side of the membrane; that stretch reads NRYFIFGPTACKIE. Cysteines 115 and 192 form a disulfide. Residues 119–138 form a helical membrane-spanning segment; that stretch reads GFVATLGGMVSLWSLSVVAF. Residues 139–157 are Cytoplasmic-facing; sequence ERWLVICKPVGNFSFKGTH. The chain crosses the membrane as a helical span at residues 158-181; sequence AIIGCALTWFFALLASTPPLFGWS. Over 182–207 the chain is Extracellular; the sequence is RYIPEGLQCSCGPDWYTTENKYNNES. Asn205 is a glycosylation site (N-linked (GlcNAc...) asparagine). The helical transmembrane segment at 208–235 threads the bilayer; sequence YVMFLFCFCFGFPFTVILFCYGQLLFTL. At 236 to 257 the chain is on the cytoplasmic side; the sequence is KSAAKAQADSASTQKAEREVTK. The chain crosses the membrane as a helical span at residues 258-281; it reads MVVVMVMGFLVCWLPYASFALWVV. The Extracellular segment spans residues 282–289; it reads FNRGQSFD. Residues 290–314 traverse the membrane as a helical segment; it reads LRLGTIPSCFSKASTVYNPVIYVFM. Lys301 bears the N6-(retinylidene)lysine mark. The Cytoplasmic segment spans residues 315-355; the sequence is NKQFRSCMMKLIFCGKSPFGDDEEASSSSQVTQVSSVGPEK. The tract at residues 334–355 is disordered; the sequence is GDDEEASSSSQVTQVSSVGPEK. Residues 340 to 355 are compositionally biased toward low complexity; the sequence is SSSSQVTQVSSVGPEK.

This sequence belongs to the G-protein coupled receptor 1 family. Opsin subfamily. In terms of processing, phosphorylated on some or all of the serine and threonine residues present in the C-terminal region. In terms of tissue distribution, the color pigments are found in the cone photoreceptor cells.

The protein resides in the membrane. Visual pigments are the light-absorbing molecules that mediate vision. They consist of an apoprotein, opsin, covalently linked to cis-retinal. The sequence is that of Blue-sensitive opsin (B23) from Psalidodon fasciatus (Banded astyanax).